We begin with the raw amino-acid sequence, 1082 residues long: Transcription elongation factor SPT5 (1082 aa).

Residues 1–28 (MSDSEDSNFSEEEDSERSSEAEEAEVEE) show a composition bias toward acidic residues. The disordered stretch occupies residues 1 to 88 (MSDSEDSNFS…DVDDEYEDED (88 aa)). 2 positions are modified to phosphoserine: Ser-32 and Ser-36. Acidic residues-rich tracts occupy residues 38–62 (KEEEPEEEEEEEEEYDEEEEEEDDD) and 76–88 (DEADVDDEYEDED). Lys-141 is covalently cross-linked (Glycyl lysine isopeptide (Lys-Gly) (interchain with G-Cter in SUMO2)). The tract at residues 174–268 (DPNLWTVKCK…TDVLKVVKEV (95 aa)) is interaction with SUPT4H1 and SUPT4H2. A KOW 1 domain is found at 271–304 (LKPKSWVRLKRGIYKDDIAQVDYVEPSQNTISLK). The tract at residues 311-418 (YDRIKARMSL…STGKEREHNF (108 aa)) is interaction with RNA polymerase II. Residues 326-332 (KRKKFKR) carry the UBR5-degron motif. KOW domains lie at 418–449 (FQPGDNVEVCEGELINLQGKVLSVDGNKITIM) and 470–501 (FKMGDHVKVIAGRFEGDTGLIVRVEENFVILF). Residue Lys-577 participates in RNA binding. Positions 592 to 625 (IHVKDIVKVIDGPHSGREGEIRHLYRSFAFLHCK) constitute a KOW 4 domain. Arg-617 serves as a coordination point for DNA. A Phosphothreonine modification is found at Thr-661. Ser-664 and Ser-684 each carry phosphoserine. Residues 669-694 (SPMHPSAEGQHGGFGSPGGMSRGRGR) are disordered. The segment covering 678–690 (QHGGFGSPGGMSR) has biased composition (gly residues). Asymmetric dimethylarginine; alternate is present on residues Arg-690 and Arg-692. An omega-N-methylarginine; alternate mark is found at Arg-690 and Arg-692. Arg-692 bears the Symmetric dimethylarginine; alternate mark. One can recognise a KOW 5 domain in the interval 698–731 (ELIGQTVRISQGPYKGYIGVVKDATESTARVELH). Position 712 is an N6-acetyllysine (Lys-712). Over residues 741–801 (RQRLTTVDSQ…RTPHYGSQTP (61 aa)) the composition is skewed to polar residues. Positions 741-972 (RQRLTTVDSQ…GSGIEQNSSD (232 aa)) are disordered. One copy of the CTR1-1; approximate repeat lies at 748-753 (DSQRPG). Positions 748–811 (DSQRPGGMTS…LHDGSRTPAQ (64 aa)) are 9 X 7 AA approximate tandem repeats of G-S-[QR]-T-P-X-[YQ], motif CTR1. Residues 754-759 (GMTSTY) form a CTR1-2 repeat. Residues 760-765 (GRTPMY) form a CTR1-3 repeat. The CTR1-4 repeat unit spans residues 766–772 (GSQTPMY). Phosphothreonine; by CDK9 is present on residues Thr-769 and Thr-778. A CTR1-5 repeat occupies 775-781 (GSRTPMY). Residues 782-788 (GSQTPLQ) form a CTR1-6 repeat. Ser-783 is modified (phosphoserine). Phosphothreonine is present on residues Thr-785 and Thr-793. A CTR1-7 repeat occupies 790-796 (GSRTPHY). Residues 797 to 803 (GSQTPLH) form a CTR1-8 repeat. Phosphoserine is present on Ser-798. Phosphothreonine occurs at positions 800 and 808. Residues 805 to 811 (GSRTPAQ) form a CTR1-9 repeat. Over residues 828–838 (EEYEYAFDDEP) the composition is skewed to acidic residues. The stretch at 838 to 845 (PTPSPQAY) is one CTR2-1 repeat. A 10 X 8 AA approximate tandem repeats of P-[TS]-P-S-P-[QA]-[SG]-Y, motif CTR2 region spans residues 838–944 (PTPSPQAYGG…ASPSPSPVGY (107 aa)). Residues 848–856 (TPNPQTPGY) form a CTR2-2; approximate repeat. Over residues 851-860 (PQTPGYPDPS) the composition is skewed to pro residues. The CTR2-3; approximate repeat unit spans residues 857–863 (PDPSSPQ). The span at 861 to 884 (SPQVNPQYNPQTPGTPAMYNTDQF) shows a compositional bias: polar residues. The CTR2-4; half-length repeat unit spans residues 875-879 (TPAMY). A CTR2-5; approximate repeat occupies 890–896 (PSPQGSY). Residues 890-905 (PSPQGSYQPSPSPQSY) show a composition bias toward low complexity. One copy of the CTR2-6 repeat lies at 898 to 905 (PSPSPQSY). A CTR2-7; approximate repeat occupies 910-915 (PSPAGY). A CTR2-8 repeat occupies 918-924 (THSPASY). A CTR2-9 repeat occupies 926–933 (PTPSPMAY). A CTR2-10 repeat occupies 937-944 (PSPSPVGY). At Thr-1028 the chain carries Phosphothreonine. Lys-1031 participates in a covalent cross-link: Glycyl lysine isopeptide (Lys-Gly) (interchain with G-Cter in SUMO2).

The protein belongs to the SPT5 family. Interacts with SUPT4H1 to form DSIF. DSIF interacts with the positive transcription elongation factor b complex (P-TEFb complex), which is composed of CDK9 and cyclin-T (CCNT1 or CCNT2). DSIF interacts with RNA polymerase II, and this interaction is reduced by phosphorylation of the C-terminal domain (CTD) of POLR2A by P-TEFb. DSIF also interacts with the NELF complex, which is composed of NELFA, NELFB, NELFD and NELFE, and this interaction occurs following prior binding of DSIF to RNA polymerase II. Also interacts with PRMT1/HRMT1L2, HTATSF1/TATSF1, RNGTT/CAP1A, PRMT5/SKB1, SUPT6H, and can interact with PIN1. Component of a complex which is at least composed of HTATSF1/Tat-SF1, the P-TEFb complex components CDK9 and CCNT1, RNA polymerase II, SUPT5H, and NCL/nucleolin. Interacts with MCM3AP. Post-translationally, methylated by PRMT1/HRMT1L2 and PRMT5/SKB1. Methylation negatively regulates interaction with P-TEFb and RNA polymerase II. In terms of processing, phosphorylated by CDK7 and CDK9. Phosphorylation by P-TEFb (CDK9) at Thr residues of the C-terminal repeats alleviates transcriptional pausing and promotes transcription elongation. Dephosphorylated by the INTAC complex when transcripts are unfavorably configured for transcriptional elongation, leading to premature transcription termination: dephosphorylation is mediated by the PPP2CA component of the INTAC complex. Dephosphorylated by the PNUTS-PP1 complex in termination zones downstream of poly(A) sites, thereby promoting deceleration of RNA polymerase II transcription. Dephosphorylated by the PNUTS-PP1 complex in termination zones downstream of poly(A) sites, thereby promoting deceleration of RNA polymerase II transcription. Phosphorylation may also stimulate interaction with PIN1. Bulk phosphorylation occurs predominantly in mitosis. Ubiquitinated by UBR5 when not assembled in the DSIF complex, leading to its degradation: UBR5 recognizes and binds a degron that is not accessible when SUPT5H is part of the DSIF complex.

The protein resides in the nucleus. Functionally, component of the DRB sensitivity-inducing factor complex (DSIF complex), which regulates mRNA processing and transcription elongation by RNA polymerase II. DSIF positively regulates mRNA capping by stimulating the mRNA guanylyltransferase activity of RNGTT/CAP1A. DSIF also acts cooperatively with the negative elongation factor complex (NELF complex) to enhance transcriptional pausing at sites proximal to the promoter. Transcriptional pausing may facilitate the assembly of an elongation competent RNA polymerase II complex. DSIF and NELF promote pausing by inhibition of the transcription elongation factor TFIIS/S-II. TFIIS/S-II binds to RNA polymerase II at transcription pause sites and stimulates the weak intrinsic nuclease activity of the enzyme. Cleavage of blocked transcripts by RNA polymerase II promotes the resumption of transcription from the new 3' terminus and may allow repeated attempts at transcription through natural pause sites. Following phosphorylation by CDK9, DSIF can also positively regulate transcriptional elongation. In Mus musculus (Mouse), this protein is Transcription elongation factor SPT5 (Supt5h).